We begin with the raw amino-acid sequence, 95 residues long: Putative regulatory protein Daud_1598 (95 aa).

Belongs to the RemA family.

The chain is Putative regulatory protein Daud_1598 from Desulforudis audaxviator (strain MP104C).